Here is a 113-residue protein sequence, read N- to C-terminus: Hydrogenase maturation factor HypA (113 aa).

His2 contributes to the Ni(2+) binding site. Zn(2+) is bound by residues Cys73, Cys76, Cys89, and Cys92.

Belongs to the HypA/HybF family.

Functionally, involved in the maturation of [NiFe] hydrogenases. Required for nickel insertion into the metal center of the hydrogenase. The chain is Hydrogenase maturation factor HypA from Bradyrhizobium sp. (strain ORS 278).